Consider the following 1350-residue polypeptide: Probable serine/threonine-protein kinase DDB_G0278845 (1350 aa).

8 disordered regions span residues 66–109 (RELN…NNIR), 121–159 (ENGLLESPTSPIRTSSTPTTPTSPPFITSPPFITSPKGL), 179–249 (LANN…LNSI), 270–296 (SSINGNTTTTTTNTYSYNDNDNVNEYS), 337–396 (NNYN…RDDL), 431–506 (GSTI…EKKK), 525–596 (NDSN…IPTP), and 612–701 (NNNS…NTNE). The segment covering 84-98 (KYLTSSHSSVVIPQD) has biased composition (polar residues). Low complexity-rich tracts occupy residues 127 to 140 (SPTSPIRTSSTPTT) and 181 to 210 (NNNNNNNNSNNSNNNSNSSNSNISCSNNSN). Residues 211-222 (KISRLINNSNTT) are compositionally biased toward polar residues. Residues 223–235 (DSNASIRSSNNNN) show a composition bias toward low complexity. Residues 236–246 (DDFDNNDDEDL) are compositionally biased toward acidic residues. Composition is skewed to low complexity over residues 270–293 (SSINGNTTTTTTNTYSYNDNDNVN) and 337–391 (NNYN…GYNN). Positions 431–443 (GSTIFTSTSSDIA) are enriched in polar residues. The span at 454 to 482 (NENENENENENENENENDNDSDSENENEN) shows a compositional bias: acidic residues. Low complexity-rich tracts occupy residues 483–495 (DNSIGNKSNKSNS) and 525–551 (NDSNNNNNNNNSGNNNSFISNGSPFSP). Residues 565-592 (PKPTLQRQRSNSKNVLYSPNASPSNSCK) show a composition bias toward polar residues. Composition is skewed to low complexity over residues 612-637 (NNNSNNIENQNNNNNNIDNNIDNNID), 645-679 (NNNNNNNNNNNNNNNNNNNNNNNNNNNNNNNNNNN), and 690-701 (KKTPNNKINTNE). Residues 756 to 1082 (FTLIEKIGEG…VENIKNHIFF (327 aa)) form the Protein kinase domain. ATP-binding positions include 762-770 (IGEGGFGQV) and K785. D880 serves as the catalytic Proton acceptor. Residues 1083 to 1203 (NGVPWGKLHD…PRADDQPLLW (121 aa)) form the AGC-kinase C-terminal domain. Disordered stretches follow at residues 1129–1159 (SLLPPPLPPPPQTPTQPQQPSLPPQTPNDKM), 1190–1219 (GFTYPRADDQPLLWNNNNNNNNNNNNNNNN), 1232–1285 (NNNN…NKTV), and 1300–1350 (NCNN…KQQQ). Pro residues predominate over residues 1131 to 1142 (LPPPLPPPPQTP). Low complexity-rich tracts occupy residues 1204–1219 (NNNNNNNNNNNNNNNN), 1232–1283 (NNNN…SNNK), and 1300–1313 (NCNNNNNNDENNIN). 2 stretches are compositionally biased toward polar residues: residues 1314–1330 (TGNLTPPNSSPFNSGEN) and 1338–1350 (PTSPYGSYSKQQQ).

It belongs to the protein kinase superfamily. AGC Ser/Thr protein kinase family.

The catalysed reaction is L-seryl-[protein] + ATP = O-phospho-L-seryl-[protein] + ADP + H(+). The enzyme catalyses L-threonyl-[protein] + ATP = O-phospho-L-threonyl-[protein] + ADP + H(+). This chain is Probable serine/threonine-protein kinase DDB_G0278845, found in Dictyostelium discoideum (Social amoeba).